Reading from the N-terminus, the 79-residue chain is Small ribosomal subunit protein bS21 (79 aa).

Residues 58–79 are disordered; sequence ARKKMQREGLLPMKPKPMPGMR.

It belongs to the bacterial ribosomal protein bS21 family.

The polypeptide is Small ribosomal subunit protein bS21 (Beijerinckia indica subsp. indica (strain ATCC 9039 / DSM 1715 / NCIMB 8712)).